The chain runs to 211 residues: Putative transposase for insertion sequence element IS402 (211 aa).

The segment at 51 to 71 (RRWGRPKTGPNPTDRARPGSK) is disordered.

Belongs to the transposase 11 family.

Functionally, involved in the transposition of the insertion sequence. The polypeptide is Putative transposase for insertion sequence element IS402 (Burkholderia cepacia (Pseudomonas cepacia)).